Here is a 156-residue protein sequence, read N- to C-terminus: 3-hydroxyacyl-[acyl-carrier-protein] dehydratase FabZ (156 aa).

Residue His-57 is part of the active site.

It belongs to the thioester dehydratase family. FabZ subfamily.

It localises to the cytoplasm. The enzyme catalyses a (3R)-hydroxyacyl-[ACP] = a (2E)-enoyl-[ACP] + H2O. Involved in unsaturated fatty acids biosynthesis. Catalyzes the dehydration of short chain beta-hydroxyacyl-ACPs and long chain saturated and unsaturated beta-hydroxyacyl-ACPs. The protein is 3-hydroxyacyl-[acyl-carrier-protein] dehydratase FabZ of Anaeromyxobacter dehalogenans (strain 2CP-1 / ATCC BAA-258).